A 163-amino-acid chain; its full sequence is Staphylokinase (163 aa).

An N-terminal signal peptide occupies residues 1–27; the sequence is MLKRSLLFLTVLLLLFSFSSITNEVSA.

It belongs to the staphylokinase family.

It is found in the secreted. Functionally, potent plasminogen activator that converts plasminogen into plasmin. It forms a 1:1 complex with plasmin, which in turn activates other plasminogen molecules. This is Staphylokinase (sak) from Staphylococcus aureus (Bacteriophage P42D).